Consider the following 100-residue polypeptide: Small ribosomal subunit protein uS14 (100 aa).

This sequence belongs to the universal ribosomal protein uS14 family. Part of the 30S ribosomal subunit. Contacts proteins S3 and S10.

In terms of biological role, binds 16S rRNA, required for the assembly of 30S particles and may also be responsible for determining the conformation of the 16S rRNA at the A site. This chain is Small ribosomal subunit protein uS14, found in Prochlorococcus marinus (strain NATL2A).